Consider the following 175-residue polypeptide: Transcription factor E (175 aa).

In terms of domain architecture, HTH TFE/IIEalpha-type spans 3–88 (ENPLIQQVLF…TWKPSLEKVP (86 aa)).

It belongs to the TFE family. Monomer. Interaction with RNA polymerase subunits RpoF and RpoE is necessary for Tfe stimulatory transcription activity. Able to interact with Tbp and RNA polymerase in the absence of DNA promoter. Interacts both with the preinitiation and elongation complexes.

Functionally, transcription factor that plays a role in the activation of archaeal genes transcribed by RNA polymerase. Facilitates transcription initiation by enhancing TATA-box recognition by TATA-box-binding protein (Tbp), and transcription factor B (Tfb) and RNA polymerase recruitment. Not absolutely required for transcription in vitro, but particularly important in cases where Tbp or Tfb function is not optimal. It dynamically alters the nucleic acid-binding properties of RNA polymerases by stabilizing the initiation complex and destabilizing elongation complexes. Seems to translocate with the RNA polymerase following initiation and acts by binding to the non template strand of the transcription bubble in elongation complexes. The sequence is that of Transcription factor E from Methanococcus maripaludis (strain DSM 14266 / JCM 13030 / NBRC 101832 / S2 / LL).